The sequence spans 319 residues: Aspartate carbamoyltransferase catalytic subunit (319 aa).

Residues R65 and T66 each contribute to the carbamoyl phosphate site. K93 provides a ligand contact to L-aspartate. Residues R115, H143, and Q146 each contribute to the carbamoyl phosphate site. L-aspartate-binding residues include R176 and R230. 2 residues coordinate carbamoyl phosphate: G271 and P272.

The protein belongs to the aspartate/ornithine carbamoyltransferase superfamily. ATCase family. In terms of assembly, heterododecamer (2C3:3R2) of six catalytic PyrB chains organized as two trimers (C3), and six regulatory PyrI chains organized as three dimers (R2).

It carries out the reaction carbamoyl phosphate + L-aspartate = N-carbamoyl-L-aspartate + phosphate + H(+). It functions in the pathway pyrimidine metabolism; UMP biosynthesis via de novo pathway; (S)-dihydroorotate from bicarbonate: step 2/3. Functionally, catalyzes the condensation of carbamoyl phosphate and aspartate to form carbamoyl aspartate and inorganic phosphate, the committed step in the de novo pyrimidine nucleotide biosynthesis pathway. This Chelativorans sp. (strain BNC1) protein is Aspartate carbamoyltransferase catalytic subunit.